We begin with the raw amino-acid sequence, 132 residues long: SH2 domain-containing protein 1B (132 aa).

The SH2 domain maps to 5-101; it reads YYHGRLTKQD…GMVVHLLKPI (97 aa). A Phosphotyrosine modification is found at tyrosine 127.

Binds to the phosphorylated receptors CD84, SLAMF1, LY9 and CD244. Does not bind to non-phosphorylated SLAMF1. Interacts with SLAMF7 (via ITSM phosphorylated on 'Tyr-304'). Interacts with Src kinases HCK, LYN, FYN, FGR and LCK (via kinase domains). Interacts (phosphorylated at Tyr-127) with PLCG1.

Cytoplasmic adapter regulating receptors of the signaling lymphocytic activation molecule (SLAM) family such as CD84, SLAMF1, LY9 and CD244. In SLAM signaling seems to cooperate with SH2D1A/SAP. Plays a role in regulation of effector functions of natural killer (NK) cells by controlling signal transduction through CD244/2B4 without effecting its tyrosine phosphorylation; downstream signaling involves PLCG1 and ERK activation. Activation of SLAMF7-mediated NK cell function does not effect receptor tyrosine phosphorylation but distal signaling. In the context of NK cell-mediated cytotoxicity does not enhance conjugate formation with target cells but stimulates polarization of the microtubule-organizing center and cytotoxic granules toward the NK cell synapse. Negatively regulates CD40-induced cytokine production in dendritic cells downstream of SLAM family receptors probably by inducing activation of the PI3K pathway to inhibit p38 MAPK and JNK activation. This chain is SH2 domain-containing protein 1B (SH2D1B), found in Homo sapiens (Human).